Reading from the N-terminus, the 509-residue chain is Probable cytosol aminopeptidase (509 aa).

2 residues coordinate Mn(2+): K277 and D282. Residue K289 is part of the active site. Residues D300, D359, and E361 each coordinate Mn(2+). R363 is an active-site residue.

The protein belongs to the peptidase M17 family. The cofactor is Mn(2+).

The protein resides in the cytoplasm. It carries out the reaction Release of an N-terminal amino acid, Xaa-|-Yaa-, in which Xaa is preferably Leu, but may be other amino acids including Pro although not Arg or Lys, and Yaa may be Pro. Amino acid amides and methyl esters are also readily hydrolyzed, but rates on arylamides are exceedingly low.. It catalyses the reaction Release of an N-terminal amino acid, preferentially leucine, but not glutamic or aspartic acids.. Functionally, presumably involved in the processing and regular turnover of intracellular proteins. Catalyzes the removal of unsubstituted N-terminal amino acids from various peptides. This chain is Probable cytosol aminopeptidase, found in Chloroherpeton thalassium (strain ATCC 35110 / GB-78).